The following is a 536-amino-acid chain: Alpha-1,3-mannosyl-glycoprotein 4-beta-N-acetylglucosaminyltransferase A (536 aa).

The Cytoplasmic portion of the chain corresponds to 1–6 (MRLRNG). The helical; Signal-anchor for type II membrane protein transmembrane segment at 7–27 (TVATALVFITTFLSLSWYTAW) threads the bilayer. Positions 28–54 (QNGKEKLMAYQREFHALKERLRIAEHR) form a coiled coil. Over 28–536 (QNGKEKLMAY…EIHIKRNPAD (509 aa)) the chain is Lumenal. Asparagine 77 and asparagine 458 each carry an N-linked (GlcNAc...) asparagine glycan.

This sequence belongs to the glycosyltransferase 54 family. A divalent metal cation is required as a cofactor. In terms of processing, N-glycosylated.

Its subcellular location is the golgi apparatus membrane. The protein localises to the secreted. It carries out the reaction N(4)-{beta-D-GlcNAc-(1-&gt;2)-alpha-D-Man-(1-&gt;3)-[beta-D-GlcNAc-(1-&gt;2)-alpha-D-Man-(1-&gt;6)]-beta-D-Man-(1-&gt;4)-beta-D-GlcNAc-(1-&gt;4)-beta-D-GlcNAc}-L-asparaginyl-[protein] + UDP-N-acetyl-alpha-D-glucosamine = N(4)-{beta-D-GlcNAc-(1-&gt;2)-[beta-D-GlcNAc-(1-&gt;4)]-alpha-D-Man-(1-&gt;3)-[beta-D-GlcNAc-(1-&gt;2)-alpha-D-Man-(1-&gt;6)]-beta-D-Man-(1-&gt;4)-beta-D-GlcNAc-(1-&gt;4)-beta-D-GlcNAc}-L-asparaginyl-[protein] + UDP + H(+). The enzyme catalyses an N(4)-{beta-D-GlcNAc-(1-&gt;2)-alpha-D-Man-(1-&gt;3)-[alpha-D-Man-(1-&gt;6)]-beta-D-Man-(1-&gt;4)-beta-D-GlcNAc-(1-&gt;4)-beta-D-GlcNAc}-L-asparaginyl-[protein] + UDP-N-acetyl-alpha-D-glucosamine = an N(4)-{beta-D-GlcNAc-(1-&gt;2)-[beta-D-GlcNAc-(1-&gt;4)]-alpha-D-Man-(1-&gt;3)-[alpha-D-Man-(1-&gt;6)]-beta-D-Man-(1-&gt;4)-beta-D-GlcNAc-(1-&gt;4)-beta-D-GlcNAc}-L-asparaginyl-[protein] + UDP + H(+). It catalyses the reaction an N(4)-{beta-D-GlcNAc-(1-&gt;2)-alpha-D-Man-(1-&gt;3)-[beta-D-GlcNAc-(1-&gt;2)-[beta-D-GlcNAc-(1-&gt;6)]-alpha-D-Man-(1-&gt;6)]-beta-D-Man-(1-&gt;4)-beta-D-GlcNAc-(1-&gt;4)-beta-D-GlcNAc}-L-asparaginyl-[protein] + UDP-N-acetyl-alpha-D-glucosamine = an N(4)-{beta-D-GlcNAc-(1-&gt;2)-[beta-D-GlcNAc-(1-&gt;4)]-alpha-D-Man-(1-&gt;3)-[beta-D-GlcNAc-(1-&gt;2)-[beta-D-GlcNAc-(1-&gt;6)]-alpha-D-Man-(1-&gt;6)]-beta-D-Man-(1-&gt;4)-beta-D-GlcNAc-(1-&gt;4)-beta-D-GlcNAc}-L-asparaginyl-[protein] + UDP + H(+). The catalysed reaction is an N(4)-{beta-D-GlcNAc-(1-&gt;2)-alpha-D-Man-(1-&gt;3)-[beta-D-GlcNAc-(1-&gt;2)-alpha-D-Man-(1-&gt;6)]-beta-D-Man-(1-&gt;4)-beta-D-GlcNAc-(1-&gt;4)-[alpha-L-Fuc-(1-&gt;6)]-beta-D-GlcNAc}-L-asparaginyl-[protein] + UDP-N-acetyl-alpha-D-glucosamine = N(4)-{beta-D-GlcNAc-(1-&gt;2)-[beta-D-GlcNAc-(1-&gt;4)]-alpha-D-Man-(1-&gt;3)-[beta-D-GlcNAc-(1-&gt;2)-alpha-D-Man-(1-&gt;6)]-beta-D-Man-(1-&gt;4)-beta-D-GlcNAc-(1-&gt;4)-[alpha-L-Fuc-(1-&gt;6)]-beta-D-GlcNAc}-asparaginyl-[protein] + UDP + H(+). It carries out the reaction an N(4)-{beta-D-GlcNAc-(1-&gt;2)-alpha-D-Man-(1-&gt;3)-[beta-D-Gal-(1-&gt;4)-beta-D-GlcNAc-(1-&gt;2)-alpha-D-Man-(1-&gt;6)]-beta-D-Man-(1-&gt;4)-beta-D-GlcNAc-(1-&gt;4)-beta-D-GlcNAc}-L-asparaginyl-[protein] + UDP-N-acetyl-alpha-D-glucosamine = an N(4)-{beta-D-GlcNAc-(1-&gt;2)-[beta-D-GlcNAc-(1-&gt;4)]-alpha-D-Man-(1-&gt;3)-[beta-D-Gal-(1-&gt;4)-beta-D-GlcNAc-(1-&gt;2)-alpha-D-Man-(1-&gt;6)]-beta-D-Man-(1-&gt;4)-beta-D-GlcNAc-(1-&gt;4)-beta-D-GlcNAc}-L-asparaginyl-[protein] + UDP + H(+). The enzyme catalyses N(4)-{beta-D-GlcNAc-(1-&gt;2)-alpha-D-Man-(1-&gt;3)-[alpha-D-Man-(1-&gt;3)-{alpha-D-Man-(1-&gt;6)}-alpha-D-Man-(1-&gt;6)]-beta-D-Man-(1-&gt;4)-beta-D-GlcNAc-(1-&gt;4)-beta-D-GlcNAc}-asparaginyl-[protein] + UDP-N-acetyl-alpha-D-glucosamine = N(4)-{beta-D-GlcNAc-(1-&gt;2)-[beta-D-GlcNAc-(1-&gt;4)]-alpha-D-Man-(1-&gt;3)-[alpha-D-Man-(1-&gt;3)-{alpha-D-Man-(1-&gt;6)}-alpha-D-Man-(1-&gt;6)]-beta-D-Man-(1-&gt;4)-beta-D-GlcNAc-(1-&gt;4)-beta-D-GlcNAc}-asparaginyl-[protein] + UDP + H(+). It catalyses the reaction N(4)-{beta-D-GlcNAc-(1-&gt;2)-alpha-D-Man-(1-&gt;3)-beta-D-Man-(1-&gt;4)-beta-D-GlcNAc-(1-&gt;4)-beta-D-GlcNAc}-asparaginyl-[protein] + UDP-N-acetyl-alpha-D-glucosamine = N(4)-{beta-D-GlcNAc-(1-&gt;2)-[beta-D-GlcNAc-(1-&gt;4)]-alpha-D-Man-(1-&gt;3)-beta-D-Man-(1-&gt;4)-beta-D-GlcNAc-(1-&gt;4)-beta-D-GlcNAc}-asparaginyl-[protein] + UDP + H(+). Its pathway is protein modification; protein glycosylation. Its activity is regulated as follows. Inhibited by UDP. In terms of biological role, glycosyltransferase that catalyze the transfer of GlcNAc from UDP-GlcNAc to the GlcNAcbeta1-2Manalpha1-3 arm of the core structure of N-linked glycans through a beta1-4 linkage and participates in the production of tri- and tetra-antennary N-linked sugar chains. Involved in glucose transport by mediating SLC2A2/GLUT2 glycosylation, thereby controlling cell-surface expression of SLC2A2 in pancreatic beta cells. This Xenopus tropicalis (Western clawed frog) protein is Alpha-1,3-mannosyl-glycoprotein 4-beta-N-acetylglucosaminyltransferase A.